A 273-amino-acid chain; its full sequence is Glutamate 5-kinase (273 aa).

Position 15 (Lys-15) interacts with ATP. Residues Ser-55, Asp-142, and Asn-158 each coordinate substrate. ATP is bound by residues 178-179 (SD) and 220-226 (TGGMLSK).

It belongs to the glutamate 5-kinase family.

The protein localises to the cytoplasm. The enzyme catalyses L-glutamate + ATP = L-glutamyl 5-phosphate + ADP. Its pathway is amino-acid biosynthesis; L-proline biosynthesis; L-glutamate 5-semialdehyde from L-glutamate: step 1/2. In terms of biological role, catalyzes the transfer of a phosphate group to glutamate to form L-glutamate 5-phosphate. The polypeptide is Glutamate 5-kinase (Streptococcus pyogenes serotype M49 (strain NZ131)).